A 220-amino-acid chain; its full sequence is Charged multivesicular body protein 3 (220 aa).

Gly2 carries the N-myristoyl glycine lipid modification. A coiled-coil region spans residues 22–54 (KIRKEMRVIDRQIRDIQREQEKVKRSIKESAKK). The tract at residues 168–169 (IL) is important for autoinhibitory function. The segment at 196–220 (AMAASDEEEEEDLEAMQSRLAALRS) is disordered. Residues 197–220 (MAASDEEEEEDLEAMQSRLAALRS) adopt a coiled-coil conformation. Residues 200-209 (SDEEEEEDLE) are compositionally biased toward acidic residues. Positions 201 to 209 (DEEEEEDLE) match the MIT-interacting motif motif. 2 interaction with STAMBP regions span residues 203–207 (EEEED) and 219–220 (RS).

This sequence belongs to the SNF7 family. In terms of assembly, probable core component of the endosomal sorting required for transport complex III (ESCRT-III). ESCRT-III components are thought to multimerize to form a flat lattice on the perimeter membrane of the endosome. Several assembly forms of ESCRT-III may exist that interact and act sequentially.

The protein resides in the cytoplasm. It localises to the cytosol. It is found in the membrane. The protein localises to the endosome. Its subcellular location is the late endosome membrane. Probable core component of the endosomal sorting required for transport complex III (ESCRT-III) which is involved in multivesicular bodies (MVBs) formation and sorting of endosomal cargo proteins into MVBs. MVBs contain intraluminal vesicles (ILVs) that are generated by invagination and scission from the limiting membrane of the endosome and mostly are delivered to lysosomes enabling degradation of membrane proteins, such as stimulated growth factor receptors, lysosomal enzymes and lipids. Involved in late stages of cytokinesis. Plays a role in endosomal sorting/trafficking of EGF receptor. This Xenopus tropicalis (Western clawed frog) protein is Charged multivesicular body protein 3 (chmp3).